A 246-amino-acid polypeptide reads, in one-letter code: MVSLTKRCIAEFIGTFILVFFGAGSAAVTLMIASGGTSPNPFNIGIGLLGGLGDWVAIGLAFGFAIAASIYALGNISGCHINPAVTIGLWSVKKFPGREVVPYIIAQLLGAAFGSFIFLQCAGIGAATVGGLGATAPFPGISYWQAMLAEVVGTFLLMITIMGIAVDERAPKGFAGIIIGLTVAGIITTLGNISGSSLNPARTFGPYLNDMIFAGTNLWNYYPIYVIGPIVGAVLAALTYQYLTSE.

Residues 1-11 (MVSLTKRCIAE) lie on the Cytoplasmic side of the membrane. The helical transmembrane segment at 12 to 32 (FIGTFILVFFGAGSAAVTLMI) threads the bilayer. The Extracellular segment spans residues 33–55 (ASGGTSPNPFNIGIGLLGGLGDW). The helical transmembrane segment at 56–76 (VAIGLAFGFAIAASIYALGNI) threads the bilayer. At 77–103 (SGCHINPAVTIGLWSVKKFPGREVVPY) the chain is on the cytoplasmic side. The NPA 1 signature appears at 82 to 84 (NPA). A helical membrane pass occupies residues 104-124 (IIAQLLGAAFGSFIFLQCAGI). Residues 125 to 145 (GAATVGGLGATAPFPGISYWQ) are Extracellular-facing. Residues 146–166 (AMLAEVVGTFLLMITIMGIAV) traverse the membrane as a helical segment. At 167–172 (DERAPK) the chain is on the cytoplasmic side. The chain crosses the membrane as a helical span at residues 173-193 (GFAGIIIGLTVAGIITTLGNI). At 194 to 217 (SGSSLNPARTFGPYLNDMIFAGTN) the chain is on the extracellular side. The short motif at 199–201 (NPA) is the NPA 2 element. A helical transmembrane segment spans residues 218–238 (LWNYYPIYVIGPIVGAVLAAL). Residues 239–246 (TYQYLTSE) lie on the Cytoplasmic side of the membrane.

It belongs to the MIP/aquaporin (TC 1.A.8) family. Homotetramer.

Its subcellular location is the cell membrane. Its function is as follows. Channel that permits osmotically driven movement of water in both directions. It mediates rapid entry or exit of water in response to abrupt changes in osmolarity. Also exhibits a transient but reproducible increase in the initial glycerol flux. In Methanothermobacter marburgensis (strain ATCC BAA-927 / DSM 2133 / JCM 14651 / NBRC 100331 / OCM 82 / Marburg) (Methanobacterium thermoautotrophicum), this protein is Aquaporin AqpM (aqpM).